A 120-amino-acid polypeptide reads, in one-letter code: MTDVDLAFDEQEYIPAVAQDADSGDVLMLAYVTEEALRKTRETGEAHYYSRSRDELWHKGGTSGHTQAVKEVRVDCDGDALLYIVDQTGGACHTGYESCFHRTVDGETVGEQVFDPDDVY.

D75 provides a ligand contact to Mg(2+). C76 provides a ligand contact to Zn(2+). The Mg(2+) site is built by D77 and D79. Residues C92 and C99 each contribute to the Zn(2+) site.

The protein belongs to the PRA-CH family. In terms of assembly, homodimer. Mg(2+) is required as a cofactor. Requires Zn(2+) as cofactor.

Its subcellular location is the cytoplasm. It carries out the reaction 1-(5-phospho-beta-D-ribosyl)-5'-AMP + H2O = 1-(5-phospho-beta-D-ribosyl)-5-[(5-phospho-beta-D-ribosylamino)methylideneamino]imidazole-4-carboxamide. Its pathway is amino-acid biosynthesis; L-histidine biosynthesis; L-histidine from 5-phospho-alpha-D-ribose 1-diphosphate: step 3/9. In terms of biological role, catalyzes the hydrolysis of the adenine ring of phosphoribosyl-AMP. The sequence is that of Phosphoribosyl-AMP cyclohydrolase from Haloarcula marismortui (strain ATCC 43049 / DSM 3752 / JCM 8966 / VKM B-1809) (Halobacterium marismortui).